The primary structure comprises 114 residues: Large ribosomal subunit protein uL22 (114 aa).

The protein belongs to the universal ribosomal protein uL22 family. As to quaternary structure, part of the 50S ribosomal subunit.

Functionally, this protein binds specifically to 23S rRNA; its binding is stimulated by other ribosomal proteins, e.g. L4, L17, and L20. It is important during the early stages of 50S assembly. It makes multiple contacts with different domains of the 23S rRNA in the assembled 50S subunit and ribosome. Its function is as follows. The globular domain of the protein is located near the polypeptide exit tunnel on the outside of the subunit, while an extended beta-hairpin is found that lines the wall of the exit tunnel in the center of the 70S ribosome. This Ehrlichia ruminantium (strain Gardel) protein is Large ribosomal subunit protein uL22.